The sequence spans 110 residues: Large ribosomal subunit protein uL23c (110 aa).

The protein belongs to the universal ribosomal protein uL23 family. Part of the 50S ribosomal subunit.

It localises to the plastid. It is found in the chloroplast. Binds to 23S rRNA. The polypeptide is Large ribosomal subunit protein uL23c (rpl23) (Porphyra purpurea (Red seaweed)).